Reading from the N-terminus, the 679-residue chain is Methionine--tRNA ligase (679 aa).

A 'HIGH' region motif is present at residues 14-24 (PYANGSIHLGH). Zn(2+) is bound by residues C145, C148, C158, and C161. A 'KMSKS' region motif is present at residues 331 to 335 (KMSKS). An ATP-binding site is contributed by K334. Residues 577-679 (AFAAVDLRIA…SGAKPGQRVK (103 aa)) enclose the tRNA-binding domain.

This sequence belongs to the class-I aminoacyl-tRNA synthetase family. MetG type 1 subfamily. Homodimer. Requires Zn(2+) as cofactor.

Its subcellular location is the cytoplasm. The catalysed reaction is tRNA(Met) + L-methionine + ATP = L-methionyl-tRNA(Met) + AMP + diphosphate. Is required not only for elongation of protein synthesis but also for the initiation of all mRNA translation through initiator tRNA(fMet) aminoacylation. This is Methionine--tRNA ligase from Pseudomonas paraeruginosa (strain DSM 24068 / PA7) (Pseudomonas aeruginosa (strain PA7)).